The primary structure comprises 1235 residues: Spike glycoprotein (1235 aa).

The first 13 residues, 1 to 13, serve as a signal peptide directing secretion; that stretch reads MLFVFILLLPSCL. The interval 1–330 is receptor binding site; it reads MLFVFILLLP…RRVPNLPDCK (330 aa). Over 14–1176 the chain is Extracellular; that stretch reads GYIGDFRCIQ…GTYEMYVKWP (1163 aa). In terms of domain architecture, BetaCoV S1-NTD spans 15 to 296; that stretch reads YIGDFRCIQT…SYISEIKCKT (282 aa). Cystine bridges form between Cys21-Cys158, Cys153-Cys187, Cys165-Cys246, Cys284-Cys294, and Cys329-Cys354. N-linked (GlcNAc...) asparagine; by host glycans are attached at residues Asn31, Asn60, and Asn134. Asn192 carries N-linked (GlcNAc...) asparagine; by host glycosylation. The 151-residue stretch at 327–477 folds into the BetaCoV S1-CTD domain; sequence PDCKIEEWLT…GINSGTTCST (151 aa). N-linked (GlcNAc...) asparagine; by host glycosylation is present at Asn357. 2 cysteine pairs are disulfide-bonded: Cys372–Cys425 and Cys384–Cys475. Asn435, Asn536, Asn568, Asn576, Asn599, Asn648, and Asn665 each carry an N-linked (GlcNAc...) asparagine; by host glycan. Fusion peptide regions lie at residues 781 to 802 and 800 to 820; these read SAIE…VEAY and EAYN…VQSF. An N-linked (GlcNAc...) asparagine; by host glycan is attached at Asn804. Cys805 and Cys816 form a disulfide bridge. Residues 881 to 931 form a heptad repeat 1 region; the sequence is QKMIASAFNNALGAIQEGFDATNSALGKIQSVVNANAEALNNLLNQLSNRF. Positions 910-954 form a coiled coil; that stretch reads QSVVNANAEALNNLLNQLSNRFGAISASLQEILTRLDAVEAKAQI. N-linked (GlcNAc...) asparagine; by host glycans are attached at residues Asn1091, Asn1101, Asn1120, Asn1136, and Asn1157. Residues 1125–1165 are heptad repeat 2; it reads APDLSLDFEKLNVTFLDLTYEMNRIQDAIKKLNESYINLKE. Positions 1138-1166 form a coiled coil; the sequence is TFLDLTYEMNRIQDAIKKLNESYINLKEV. A helical membrane pass occupies residues 1177–1197; it reads WYVWLLIGLAGVAVCVLLFFI. The Cytoplasmic portion of the chain corresponds to 1198-1235; that stretch reads CCCTGCGSCCFRKCGSCCDEYGGHQDSIVIHNISAHED. The KxHxx signature appears at 1231-1235; the sequence is SAHED.

Belongs to the betacoronaviruses spike protein family. As to quaternary structure, homotrimer; each monomer consists of a S1 and a S2 subunit. The resulting peplomers protrude from the virus surface as spikes. Post-translationally, specific enzymatic cleavages in vivo yield mature proteins. The precursor is processed into S1 and S2 by host cell furin or another cellular protease to yield the mature S1 and S2 proteins. Additionally, a second cleavage leads to the release of a fusion peptide after viral attachment to host cell receptor. The cytoplasmic Cys-rich domain is palmitoylated. Spike glycoprotein is digested within host endosomes.

It localises to the virion membrane. It is found in the host endoplasmic reticulum-Golgi intermediate compartment membrane. The protein localises to the host cell membrane. In terms of biological role, attaches the virion to the cell membrane by interacting with host receptor, initiating the infection. Functionally, mediates fusion of the virion and cellular membranes by acting as a class I viral fusion protein. Under the current model, the protein has at least three conformational states: pre-fusion native state, pre-hairpin intermediate state, and post-fusion hairpin state. During viral and target cell membrane fusion, the coiled coil regions (heptad repeats) assume a trimer-of-hairpins structure, positioning the fusion peptide in close proximity to the C-terminal region of the ectodomain. The formation of this structure appears to drive apposition and subsequent fusion of viral and target cell membranes. Its function is as follows. Acts as a viral fusion peptide which is unmasked following S2 cleavage occurring upon virus endocytosis. The chain is Spike glycoprotein from Mus musculus (Mouse).